A 564-amino-acid chain; its full sequence is 4-hydroxybutyrate--CoA ligase 1 (564 aa).

A helical membrane pass occupies residues 105 to 125 (VHPMHWAVFLAVIKGGFVMVP). Residues 204–212 (TSGTTGMPK), 343–348 (DFYGQT), aspartate 429, and arginine 444 each bind ATP. Threonine 348 provides a ligand contact to substrate. CoA is bound at residue 452–454 (SDY). Arginine 455 contacts substrate. CoA contacts are provided by residues arginine 484, lysine 513, and 521 to 523 (VPR). An ATP-binding site is contributed by lysine 538.

The protein belongs to the ATP-dependent AMP-binding enzyme family. Mg(2+) is required as a cofactor. The cofactor is Mn(2+).

It localises to the membrane. It carries out the reaction 4-hydroxybutanoate + ATP + CoA = 4-hydroxybutanoyl-CoA + AMP + diphosphate. The enzyme catalyses acetate + ATP + CoA = acetyl-CoA + AMP + diphosphate. It catalyses the reaction propanoate + ATP + CoA = propanoyl-CoA + AMP + diphosphate. The catalysed reaction is a medium-chain fatty acid + ATP + CoA = a medium-chain fatty acyl-CoA + AMP + diphosphate. In terms of biological role, involved in the 3-hydroxypropionate/4-hydroxybutyrate cycle which incorporates carbon dioxide into cellular carbon. Catalyzes the ligation of coenzyme A (CoA) to 4-hydroxybutyrate (4HB). It can also use butyrate, valerate, propionate, acetate and 3-hydroxybutyrate (3HB) as substrates. In Metallosphaera sedula (strain ATCC 51363 / DSM 5348 / JCM 9185 / NBRC 15509 / TH2), this protein is 4-hydroxybutyrate--CoA ligase 1.